Reading from the N-terminus, the 296-residue chain is NAD kinase (296 aa).

Asp-73 acts as the Proton acceptor in catalysis. NAD(+) is bound by residues 73 to 74 (DG), Lys-78, 151 to 152 (NE), Arg-178, Asp-180, and 191 to 196 (TAHAMS).

The protein belongs to the NAD kinase family. The cofactor is a divalent metal cation.

It localises to the cytoplasm. It catalyses the reaction NAD(+) + ATP = ADP + NADP(+) + H(+). Functionally, involved in the regulation of the intracellular balance of NAD and NADP, and is a key enzyme in the biosynthesis of NADP. Catalyzes specifically the phosphorylation on 2'-hydroxyl of the adenosine moiety of NAD to yield NADP. This is NAD kinase from Francisella tularensis subsp. holarctica (strain FTNF002-00 / FTA).